The sequence spans 642 residues: MFSPPVSSGKNGPTSLASGHFTGSNVEDRSSSGSWGNGGHPSPSRNYGDGTPYDHMTSRDLGSHDNLSPPFVNSRIQSKTERGSYSSYGRESNLQGCHQSLLGGDMDMGTPGTLSPTKPGSQYYQYSSNNPRRRPLHSSAMEVQTKKVRKVPPGLPSSVYAPSASTADYNRDSPGYPSSKPAASTFPSSFFMQDGHHSSDPWSSSSGMNQPGYGGMLGSSSHIPQSSSYCSLHPHERLSYPSHSSADINSSLPPMSTFHRSGTNHYSTSSCTPPANGTDSIMANRGSGAAGSSQTGDALGKALASIYSPDHTNNSFSSNPSTPVGSPPSLSAGTAVWSRNGGQASSSPNYEGPLHSLQSRIEDRLERLDDAIHVLRNHAVGPSTAMPGGHGDMHGIIGPSHNGAMGGLGSGYGTGLLSANRHSLMVGAHREDGVALRGSHSLVPNQVPVPQLPVQSATSPDLNPPQDPYRGMPPGLQGQSVSSGSSEIKSDDEGDENLQDTKSSEDKKLDDDKKDIKSITSNNDDEDLTPEQKAEREKERRMANNARERLRVRDINEAFKELGRMVQLHLKSDKPQTKLLILHQAVAVILSLEQQVRERNLNPKAACLKRREEEKVSSEPPPLSLAGPHPGMGDASNHMGQM.

Polar residues predominate over residues 1–25 (MFSPPVSSGKNGPTSLASGHFTGSN). An essential for MYOD1 inhibition region spans residues 1–59 (MFSPPVSSGKNGPTSLASGHFTGSNVEDRSSSGSWGNGGHPSPSRNYGDGTPYDHMTSR). 4 disordered regions span residues 1-296 (MFSP…SQTG), 311-354 (HTNN…EGPL), 444-545 (PNQV…MANN), and 609-642 (KRRE…MGQM). A phosphoserine mark is found at Ser42, Ser63, and Ser68. Polar residues-rich tracts occupy residues 83-98 (GSYS…QGCH), 112-130 (GTLS…SSNN), 181-191 (PAASTFPSSFF), 218-230 (GSSS…SSYC), and 241-281 (PSHS…TDSI). Low complexity predominate over residues 312 to 323 (TNNSFSSNPSTP). The segment covering 340–349 (NGGQASSSPN) has biased composition (polar residues). Position 347 is a phosphoserine (Ser347). The interval 354–375 (LHSLQSRIEDRLERLDDAIHVL) is leucine-zipper. 2 stretches are compositionally biased toward low complexity: residues 444–455 (PNQVPVPQLPVQ) and 478–487 (GQSVSSGSSE). Ser490 is modified (phosphoserine). 2 stretches are compositionally biased toward basic and acidic residues: residues 502–517 (KSSE…KDIK) and 530–545 (PEQK…MANN). The region spanning 539–592 (ERRMANNARERLRVRDINEAFKELGRMVQLHLKSDKPQTKLLILHQAVAVILSL) is the bHLH domain. Residues 594-617 (QQVRERNLNPKAACLKRREEEKVS) form a class A specific domain region.

In terms of assembly, efficient DNA binding requires dimerization with another bHLH protein. Forms homo- or heterooligomers with myogenin. Interacts with HIVEP2. Interacts with NEUROD2. Interacts with AGBL1. In terms of tissue distribution, widely expressed.

Its subcellular location is the nucleus. Its function is as follows. Transcription factor that binds to the immunoglobulin enhancer Mu-E5/KE5-motif. Involved in the initiation of neuronal differentiation. Activates transcription by binding to the E box (5'-CANNTG-3'). Binds to the thyroglobulin promoter. The polypeptide is Transcription factor 4 (TCF4) (Canis lupus familiaris (Dog)).